Reading from the N-terminus, the 198-residue chain is Nucleoid occlusion factor SlmA (198 aa).

The HTH tetR-type domain maps to 11–71; sequence PNRKHQILES…GLIDFIEESI (61 aa). The H-T-H motif DNA-binding region spans 34–53; that stretch reads TTAKLAAEVGFSEAALYRHF.

The protein belongs to the nucleoid occlusion factor SlmA family. As to quaternary structure, homodimer. Interacts with FtsZ.

The protein resides in the cytoplasm. It is found in the nucleoid. Functionally, required for nucleoid occlusion (NO) phenomenon, which prevents Z-ring formation and cell division over the nucleoid. Acts as a DNA-associated cell division inhibitor that binds simultaneously chromosomal DNA and FtsZ, and disrupts the assembly of FtsZ polymers. SlmA-DNA-binding sequences (SBS) are dispersed on non-Ter regions of the chromosome, preventing FtsZ polymerization at these regions. The chain is Nucleoid occlusion factor SlmA from Colwellia psychrerythraea (strain 34H / ATCC BAA-681) (Vibrio psychroerythus).